The chain runs to 1098 residues: Beta-alanine-activating enzyme (1098 aa).

ATP-binding positions include 198 to 206 (TSGTTGIPK), Asp-428, Arg-442, and Lys-527. In terms of domain architecture, Carrier spans 553-630 (EDLWEKLQYL…EIYNHILQTV (78 aa)). Ser-589 carries the post-translational modification O-(pantetheine 4'-phosphoryl)serine. 2 positions are modified to phosphoserine: Ser-649 and Ser-724.

The protein belongs to the ATP-dependent AMP-binding enzyme family. Ubiquitously expressed in adult tissues.

In terms of biological role, covalently binds beta-alanine in an ATP-dependent manner to form a thioester bond with its phosphopantetheine group and transfers it to an, as yet, unknown acceptor. May be required for a post-translational protein modification or for post-transcriptional modification of an RNA. This is Beta-alanine-activating enzyme (AASDH) from Homo sapiens (Human).